We begin with the raw amino-acid sequence, 517 residues long: GMP synthase [glutamine-hydrolyzing] (517 aa).

Positions 9 to 199 (RILILDFGSQ…VLNVCGCEGL (191 aa)) constitute a Glutamine amidotransferase type-1 domain. Residue cysteine 86 is the Nucleophile of the active site. Active-site residues include histidine 173 and glutamate 175. The GMPS ATP-PPase domain maps to 200-392 (WTSASIIEDA…LGLPYNMLYR (193 aa)). 227-233 (SGGVDSS) provides a ligand contact to ATP.

In terms of assembly, homodimer.

It catalyses the reaction XMP + L-glutamine + ATP + H2O = GMP + L-glutamate + AMP + diphosphate + 2 H(+). Its pathway is purine metabolism; GMP biosynthesis; GMP from XMP (L-Gln route): step 1/1. Functionally, catalyzes the synthesis of GMP from XMP. In Aliivibrio fischeri (strain ATCC 700601 / ES114) (Vibrio fischeri), this protein is GMP synthase [glutamine-hydrolyzing].